A 216-amino-acid chain; its full sequence is uncharacterized protein (216 aa).

This sequence belongs to the channel forming colicin family.

This is an uncharacterized protein from Escherichia coli.